The chain runs to 303 residues: Acetylglutamate kinase (303 aa).

Substrate contacts are provided by residues 76–77, R98, and N192; that span reads GG.

The protein belongs to the acetylglutamate kinase family. ArgB subfamily.

It localises to the cytoplasm. The catalysed reaction is N-acetyl-L-glutamate + ATP = N-acetyl-L-glutamyl 5-phosphate + ADP. It functions in the pathway amino-acid biosynthesis; L-arginine biosynthesis; N(2)-acetyl-L-ornithine from L-glutamate: step 2/4. Its function is as follows. Catalyzes the ATP-dependent phosphorylation of N-acetyl-L-glutamate. This Chlorobium phaeobacteroides (strain DSM 266 / SMG 266 / 2430) protein is Acetylglutamate kinase.